Reading from the N-terminus, the 222-residue chain is Probable GTP-binding protein EngB (222 aa).

Residues 22–197 (TSAEIAFVGR…ETVVAGWFAG (176 aa)) enclose the EngB-type G domain. Positions 37 and 59 each coordinate Mg(2+). Residues 201-222 (RQADELTDGEPDDRTPDPDSAS) are disordered. A compositionally biased stretch (basic and acidic residues) spans 212–222 (DDRTPDPDSAS).

It belongs to the TRAFAC class TrmE-Era-EngA-EngB-Septin-like GTPase superfamily. EngB GTPase family. Mg(2+) serves as cofactor.

Its function is as follows. Necessary for normal cell division and for the maintenance of normal septation. In Laribacter hongkongensis (strain HLHK9), this protein is Probable GTP-binding protein EngB.